Consider the following 397-residue polypeptide: Proteasome-activating nucleotidase (397 aa).

Positions 15–58 (DYVTFLKRRIRQLELQVRTLEADKERLERELSRLRMEMSRLRQP) form a coiled coil. ATP is bound by residues 182–187 (GCGKTL) and histidine 321. The docks into pockets in the proteasome alpha-ring to cause gate opening stretch occupies residues 395–397 (MYG).

The protein belongs to the AAA ATPase family. Homohexamer. The hexameric complex has a two-ring architecture resembling a top hat that caps the 20S proteasome core at one or both ends. Upon ATP-binding, the C-terminus of PAN interacts with the alpha-rings of the proteasome core by binding to the intersubunit pockets.

Its subcellular location is the cytoplasm. In terms of biological role, ATPase which is responsible for recognizing, binding, unfolding and translocation of substrate proteins into the archaeal 20S proteasome core particle. Is essential for opening the gate of the 20S proteasome via an interaction with its C-terminus, thereby allowing substrate entry and access to the site of proteolysis. Thus, the C-termini of the proteasomal ATPase function like a 'key in a lock' to induce gate opening and therefore regulate proteolysis. Unfolding activity requires energy from ATP hydrolysis, whereas ATP binding alone promotes ATPase-20S proteasome association which triggers gate opening, and supports translocation of unfolded substrates. This Thermococcus kodakarensis (strain ATCC BAA-918 / JCM 12380 / KOD1) (Pyrococcus kodakaraensis (strain KOD1)) protein is Proteasome-activating nucleotidase.